A 1220-amino-acid polypeptide reads, in one-letter code: DNA-directed RNA polymerase subunit beta (1220 aa).

This sequence belongs to the RNA polymerase beta chain family. In terms of assembly, the RNAP catalytic core consists of 2 alpha, 1 beta, 1 beta' and 1 omega subunit. When a sigma factor is associated with the core the holoenzyme is formed, which can initiate transcription.

It catalyses the reaction RNA(n) + a ribonucleoside 5'-triphosphate = RNA(n+1) + diphosphate. Functionally, DNA-dependent RNA polymerase catalyzes the transcription of DNA into RNA using the four ribonucleoside triphosphates as substrates. The sequence is that of DNA-directed RNA polymerase subunit beta from Mesomycoplasma hyopneumoniae (strain J / ATCC 25934 / NCTC 10110) (Mycoplasma hyopneumoniae).